The sequence spans 119 residues: Large ribosomal subunit protein uL22 (119 aa).

Belongs to the universal ribosomal protein uL22 family. As to quaternary structure, part of the 50S ribosomal subunit.

This protein binds specifically to 23S rRNA; its binding is stimulated by other ribosomal proteins, e.g. L4, L17, and L20. It is important during the early stages of 50S assembly. It makes multiple contacts with different domains of the 23S rRNA in the assembled 50S subunit and ribosome. In terms of biological role, the globular domain of the protein is located near the polypeptide exit tunnel on the outside of the subunit, while an extended beta-hairpin is found that lines the wall of the exit tunnel in the center of the 70S ribosome. The protein is Large ribosomal subunit protein uL22 of Chlorobium luteolum (strain DSM 273 / BCRC 81028 / 2530) (Pelodictyon luteolum).